The following is a 639-amino-acid chain: Sec1 family domain-containing protein 1 (639 aa).

A phosphoserine mark is found at serine 34, serine 300, and serine 525.

It belongs to the STXBP/unc-18/SEC1 family. As to quaternary structure, interacts with STX17. Interacts with STX5A. Interacts with the COG complex via COG4.

Its subcellular location is the cytoplasm. The protein localises to the endoplasmic reticulum membrane. It localises to the golgi apparatus. The protein resides in the golgi stack membrane. Functionally, plays a role in SNARE-pin assembly and Golgi-to-ER retrograde transport via its interaction with COG4. Involved in vesicular transport between the endoplasmic reticulum and the Golgi. This Mus musculus (Mouse) protein is Sec1 family domain-containing protein 1 (Scfd1).